The following is a 241-amino-acid chain: Histidine utilization repressor (241 aa).

An HTH gntR-type domain is found at 11 to 79; it reads APFYEKVKQA…QGVGTFVAEP (69 aa). The segment at residues 39-58 is a DNA-binding region (H-T-H motif); the sequence is EAELVAQFGFSRMTINRALR.

It functions in the pathway amino-acid degradation; L-histidine degradation into L-glutamate [regulation]. Functionally, repressor which binds to the hutP region in the histidine utilization (hut) operon. It blocks the expression of all the hut genes in the absence of inducer. This Klebsiella aerogenes (Enterobacter aerogenes) protein is Histidine utilization repressor (hutC).